A 334-amino-acid polypeptide reads, in one-letter code: Probable GTP 3',8-cyclase (334 aa).

A Radical SAM core domain is found at 24–256; it reads PYGRKVTGLR…RKKYIIDGVE (233 aa). Arg-33 serves as a coordination point for GTP. Residues Cys-40 and Cys-44 each contribute to the [4Fe-4S] cluster site. Residue Tyr-46 coordinates S-adenosyl-L-methionine. Position 47 (Cys-47) interacts with [4Fe-4S] cluster. Lys-85 lines the GTP pocket. Gly-89 provides a ligand contact to S-adenosyl-L-methionine. Thr-113 serves as a coordination point for GTP. Residue Ser-137 participates in S-adenosyl-L-methionine binding. Lys-176 provides a ligand contact to GTP. Residues Cys-269 and Cys-272 each coordinate [4Fe-4S] cluster. Position 274–276 (274–276) interacts with GTP; that stretch reads RLR. Cys-286 is a binding site for [4Fe-4S] cluster.

The protein belongs to the radical SAM superfamily. MoaA family. Requires [4Fe-4S] cluster as cofactor.

It carries out the reaction GTP + AH2 + S-adenosyl-L-methionine = (8S)-3',8-cyclo-7,8-dihydroguanosine 5'-triphosphate + 5'-deoxyadenosine + L-methionine + A + H(+). It participates in cofactor biosynthesis; molybdopterin biosynthesis. Its function is as follows. Catalyzes the cyclization of GTP to (8S)-3',8-cyclo-7,8-dihydroguanosine 5'-triphosphate. The sequence is that of Probable GTP 3',8-cyclase from Methanosarcina acetivorans (strain ATCC 35395 / DSM 2834 / JCM 12185 / C2A).